We begin with the raw amino-acid sequence, 785 residues long: Altered inheritance of mitochondria protein 3-2 (785 aa).

Disordered stretches follow at residues 33–122 (TGYQ…QPYM), 142–406 (QQVA…SENL), and 418–785 (NVDV…RLHK). A compositionally biased stretch (low complexity) spans 91–102 (GSSGNSANGSSA). Polar residues-rich tracts occupy residues 103 to 122 (TIPT…QPYM) and 143 to 199 (QVAT…QLNI). The span at 249–260 (KPYDWEEQKTTK) shows a compositional bias: basic and acidic residues. Composition is skewed to polar residues over residues 283–310 (SRQG…TTTG), 350–366 (ATNN…QNTK), 375–388 (TNKS…SNVM), 395–405 (QMNTKANSSEN), and 455–465 (SSISRDNYNSI). The span at 478–497 (NTGEREGAQELKADIAERSQ) shows a compositional bias: basic and acidic residues. Polar residues predominate over residues 527–556 (AQTSSDIPQKSSLVTDESNISVPNKSQQPM). Basic and acidic residues-rich tracts occupy residues 587 to 613 (KSLE…EQLK) and 624 to 637 (KNMK…DNKN). The span at 659–671 (SLTSEGNHMNLNT) shows a compositional bias: polar residues. Composition is skewed to basic and acidic residues over residues 672-686 (EKGK…DESK) and 700-710 (FKREELSKEVV).

The protein belongs to the AIM3 family.

It localises to the membrane raft. This is Altered inheritance of mitochondria protein 3-2 (AIM3-2) from Candida glabrata (strain ATCC 2001 / BCRC 20586 / JCM 3761 / NBRC 0622 / NRRL Y-65 / CBS 138) (Yeast).